The chain runs to 339 residues: Bifunctional phosphoglucose/phosphomannose isomerase (339 aa).

One can recognise an SIS domain in the interval 22–164 (ISVNVKAEDI…IEPVDDQIEE (143 aa)). Residues Gly41, Ser42, Ser83, Ser85, Thr88, and Arg135 each coordinate D-fructose 6-phosphate. Glu221 (proton acceptor) is an active-site residue. D-fructose 6-phosphate is bound by residues His237 and Lys331. The active-site Proton donor is the His237. Lys331 acts as the Proton acceptor in catalysis.

It belongs to the PGI/PMI family. In terms of assembly, homodimer.

It catalyses the reaction alpha-D-glucose 6-phosphate = beta-D-fructose 6-phosphate. The enzyme catalyses D-mannose 6-phosphate = D-fructose 6-phosphate. Its function is as follows. Dual specificity isomerase that catalyzes the isomerization of both glucose-6-phosphate and mannose-6-phosphate to fructose-6-phosphate. The chain is Bifunctional phosphoglucose/phosphomannose isomerase from Caldicellulosiruptor bescii (strain ATCC BAA-1888 / DSM 6725 / KCTC 15123 / Z-1320) (Anaerocellum thermophilum).